Consider the following 1219-residue polypeptide: Polyamine-transporting ATPase 13A3 (1219 aa).

At Met-1–Lys-28 the chain is on the cytoplasmic side. The stretch at Leu-29 to Trp-49 is an intramembrane region. Residues Leu-50–Lys-201 lie on the Cytoplasmic side of the membrane. Residues Leu-202 to Trp-222 traverse the membrane as a helical segment. Over Ser-223–Tyr-228 the chain is Lumenal. The chain crosses the membrane as a helical span at residues Tyr-229 to Ile-249. The Cytoplasmic portion of the chain corresponds to Arg-250 to Asp-405. Residues Ala-406–Ile-426 form a helical membrane-spanning segment. Residues Asn-427–Asp-444 lie on the Lumenal side of the membrane. The chain crosses the membrane as a helical span at residues Ile-445–Ala-465. Topologically, residues Gln-466 to Lys-936 are cytoplasmic. Asp-494 acts as the 4-aspartylphosphate intermediate in catalysis. Mg(2+) is bound by residues Asp-494 and Thr-496. ATP contacts are provided by residues Asp-494 to Thr-496, Phe-624, Arg-680, and Asp-746. Position 813 is a phosphoserine (Ser-813). Residues Asp-879 and Asp-883 each coordinate Mg(2+). An ATP-binding site is contributed by Asp-879–Asp-883. A helical transmembrane segment spans residues Phe-937–Ser-957. Position 958 (Asn-958) is a topological domain, lumenal. A helical transmembrane segment spans residues Leu-959–Met-979. Topologically, residues Ser-980 to Ser-995 are cytoplasmic. The chain crosses the membrane as a helical span at residues Gly-996–Phe-1016. Residues Gln-1017 to Asn-1066 lie on the Lumenal side of the membrane. Residues Thr-1067–Gly-1087 form a helical membrane-spanning segment. The Cytoplasmic portion of the chain corresponds to Lys-1088–Tyr-1098. The chain crosses the membrane as a helical span at residues Phe-1099–Val-1119. Residues Ala-1120–Arg-1136 lie on the Lumenal side of the membrane. Residues Ile-1137–Val-1157 form a helical membrane-spanning segment. The Cytoplasmic portion of the chain corresponds to Asp-1158–Ala-1219.

Belongs to the cation transport ATPase (P-type) (TC 3.A.3) family. Type V subfamily. As to expression, expression is greatest in liver, followed by kidney, colon, stomach, brain and small intestine. Isoform 1 is highly expressed in the kidney while isoform 2 is highly expressed in the brain.

The protein resides in the recycling endosome membrane. The protein localises to the early endosome membrane. Its subcellular location is the late endosome membrane. The catalysed reaction is putrescine(out) + ATP + H2O = putrescine(in) + ADP + phosphate + H(+). Functionally, ATP-driven pump involved in endocytosis-dependent polyamine transport. Uses ATP as an energy source to transfer polyamine precursor putrescine from the endosomal compartment to the cytosol. In Mus musculus (Mouse), this protein is Polyamine-transporting ATPase 13A3.